Consider the following 729-residue polypeptide: Polyphosphate kinase (729 aa).

The tract at residues 1 to 46 (MTEAQTRTEPSESSESSEAVAPAITSAADSAPEAPPATTAPAIENP) is disordered. Over residues 25–42 (TSAADSAPEAPPATTAPA) the composition is skewed to low complexity. Asparagine 90 provides a ligand contact to ATP. Residues arginine 422 and arginine 452 each contribute to the Mg(2+) site. Residue histidine 482 is the Phosphohistidine intermediate of the active site. 3 residues coordinate ATP: tyrosine 515, arginine 611, and histidine 639.

Belongs to the polyphosphate kinase 1 (PPK1) family. Requires Mg(2+) as cofactor. An intermediate of this reaction is the autophosphorylated ppk in which a phosphate is covalently linked to a histidine residue through a N-P bond.

It carries out the reaction [phosphate](n) + ATP = [phosphate](n+1) + ADP. Its function is as follows. Catalyzes the reversible transfer of the terminal phosphate of ATP to form a long-chain polyphosphate (polyP). The protein is Polyphosphate kinase of Mycolicibacterium gilvum (strain PYR-GCK) (Mycobacterium gilvum (strain PYR-GCK)).